A 503-amino-acid chain; its full sequence is Zinc finger protein JACKDAW (503 aa).

The segment covering 32–51 (IPDLNPNSNPNPNAKPNSSS) has biased composition (low complexity). The tract at residues 32–68 (IPDLNPNSNPNPNAKPNSSSAKKKRNQPGTPDPDADV) is disordered. Ser72 carries the post-translational modification Phosphoserine. C2H2-type zinc fingers lie at residues 82–104 (FVCE…RRGH) and 124–154 (YICP…SRKH). Short sequence motifs (nuclear localization signal) lie at residues 100-107 (HRRGHNLP) and 146-153 (IKKHYSRK). A C2H2-type 2; degenerate zinc finger spans residues 159–182 (WKCEKCSKKYAVQSDWKAHAKTCG). Residues Cys161, Cys164, His177, Cys181, Cys188, Cys190, His203, and Cys207 each coordinate Zn(2+). Residues 186-209 (YKCDCGTLFSRKDSFITHRAFCDA) form a CCHC-type 2; atypical zinc finger. Positions 196–208 (RKDSFITHRAFCD) are SHR-binding. Disordered regions lie at residues 301–417 (SSSS…SSPM) and 432–465 (RENH…LNPA). Residues 319–358 (TSTNPSLTLSSSSTSQQTSASLQHQTLKDSSFSPLFSSSS) are compositionally biased toward low complexity. A compositionally biased stretch (polar residues) spans 381–392 (MGSTRSNSSTAP). A compositionally biased stretch (low complexity) spans 396–407 (AGPTMTSSSATA). The span at 444-465 (GVSTSSVDNNPFQSNRSGLNPA) shows a compositional bias: polar residues.

In terms of assembly, interacts with SHR, SCR, MGP and itself. The heterodimer with SHR involves its zinc fingers. Interacts with SIEL. Binds to RGA and SCL3 competitively in the nucleus. As to expression, expressed in the quiescent center, the ground tissue stem cells and to a lesser extent in mature cortex and endodermis cells.

It localises to the nucleus. Functionally, transcription factor that, together with BIB, regulates tissue boundaries and asymmetric cell division by a rapid up-regulation of 'SCARECROW' (SCR), thus controlling the nuclear localization of 'SHORT-ROOT' (SHR) and restricting its action. Binds DNA via its zinc fingers. Recognizes and binds to SCL3 promoter sequence 5'-AGACAA-3' to promote its expression when in complex with RGA. Confines CYCD6 expression to the cortex-endodermis initial/daughter (CEI/CEID) tissues. Required for radial patterning and stem cell maintenance. Counteracted by 'MAGPIE' (MGP). Binds to the SCR and MGP promoter sequences. Controls position-dependent signals that regulate epidermal-cell-type patterning. The polypeptide is Zinc finger protein JACKDAW (Arabidopsis thaliana (Mouse-ear cress)).